The sequence spans 502 residues: ATP synthase subunit alpha (502 aa).

Positions Gly-119–Arg-139 are disordered. ATP is bound at residue Gly-169–Thr-176.

The protein belongs to the ATPase alpha/beta chains family. F-type ATPases have 2 components, CF(1) - the catalytic core - and CF(0) - the membrane proton channel. CF(1) has five subunits: alpha(3), beta(3), gamma(1), delta(1), epsilon(1). CF(0) has three main subunits: a(1), b(2) and c(9-12). The alpha and beta chains form an alternating ring which encloses part of the gamma chain. CF(1) is attached to CF(0) by a central stalk formed by the gamma and epsilon chains, while a peripheral stalk is formed by the delta and b chains.

The protein localises to the cell membrane. It catalyses the reaction ATP + H2O + 4 H(+)(in) = ADP + phosphate + 5 H(+)(out). Produces ATP from ADP in the presence of a proton gradient across the membrane. The alpha chain is a regulatory subunit. This chain is ATP synthase subunit alpha, found in Alkalihalophilus pseudofirmus (strain ATCC BAA-2126 / JCM 17055 / OF4) (Bacillus pseudofirmus).